Here is a 119-residue protein sequence, read N- to C-terminus: Large ribosomal subunit protein bL20 (119 aa).

This sequence belongs to the bacterial ribosomal protein bL20 family.

Functionally, binds directly to 23S ribosomal RNA and is necessary for the in vitro assembly process of the 50S ribosomal subunit. It is not involved in the protein synthesizing functions of that subunit. The chain is Large ribosomal subunit protein bL20 from Shewanella amazonensis (strain ATCC BAA-1098 / SB2B).